Here is a 742-residue protein sequence, read N- to C-terminus: Synaptic vesicle glycoprotein 2A (742 aa).

The tract at residues 1–57 is interaction with SYT1; that stretch reads MEEGFRDRAAFIRGAKDIAKEVKKHAAKKVVKGLDRVQDEYSRRSYSRFEEEDDDDD. Residues 1-169 are Cytoplasmic-facing; it reads MEEGFRDRAA…GHGRFQWTLY (169 aa). The span at 40-49 shows a compositional bias: basic and acidic residues; the sequence is EYSRRSYSRF. Residues 40–145 form a disordered region; it reads EYSRRSYSRF…RGEAQRRKDR (106 aa). Phosphoserine occurs at positions 80 and 81. Thr-84 carries the post-translational modification Phosphothreonine. Residues 122–137 show a composition bias toward gly residues; the sequence is VRGGLSDGEGPPGGRG. Ser-127 bears the Phosphoserine mark. The chain crosses the membrane as a helical span at residues 170–190; sequence FVLGLALMADGVEVFVVGFVL. Topologically, residues 191-205 are extracellular; it reads PSAEKDMCLSDSNKG. Residues 206–226 form a helical membrane-spanning segment; it reads MLGLIVYLGMMVGAFLWGGLA. Over 227 to 233 the chain is Cytoplasmic; the sequence is DRLGRRQ. The helical transmembrane segment at 234 to 254 threads the bilayer; sequence CLLISLSVNSVFAFFSSFVQG. Topologically, residues 255–262 are extracellular; the sequence is YGTFLFCR. The chain crosses the membrane as a helical span at residues 263-283; it reads LLSGVGIGGSIPIVFSYFSEF. The Cytoplasmic segment spans residues 284–294; it reads LAQEKRGEHLS. The chain crosses the membrane as a helical span at residues 295–315; sequence WLCMFWMIGGVYAAAMAWAII. Residues 316-334 lie on the Extracellular side of the membrane; sequence PHYGWSFQMGSAYQFHSWR. Residues 335 to 355 form a helical membrane-spanning segment; sequence VFVLVCAFPSVFAIGALTTQP. Topologically, residues 356 to 447 are cytoplasmic; the sequence is ESPRFFLENG…CFSPEYRRIT (92 aa). The residue at position 393 (Ser-393) is a Phosphoserine. A helical membrane pass occupies residues 448–468; it reads LMMMGVWFTMSFSYYGLTVWF. The Extracellular portion of the chain corresponds to 469–598; the sequence is PDMIRHLQAV…GTGEGAYMVY (130 aa). Tyr-480 is modified (phosphotyrosine). N-linked (GlcNAc...) asparagine glycans are attached at residues Asn-498, Asn-548, and Asn-573. Residues 599–619 traverse the membrane as a helical segment; that stretch reads FVSFLGTLAVLPGNIVSALLM. The Cytoplasmic portion of the chain corresponds to 620–626; it reads DKIGRLR. Residues 627-647 traverse the membrane as a helical segment; the sequence is MLAGSSVLSCVSCFFLSFGNS. The Extracellular segment spans residues 648-651; it reads ESAM. Residues 652 to 672 traverse the membrane as a helical segment; the sequence is IALLCLFGGVSIASWNALDVL. Residues 673–685 are Cytoplasmic-facing; the sequence is TVELYPSDKRTTA. A helical membrane pass occupies residues 686–708; it reads FGFLNALCKLAAVLGISIFTSFV. The Extracellular portion of the chain corresponds to 709–712; that stretch reads GITK. A helical transmembrane segment spans residues 713–731; it reads AAPILFASAALALGSSLAL. At 732–742 the chain is on the cytoplasmic side; the sequence is KLPETRGQVLQ.

It belongs to the major facilitator superfamily. In terms of assembly, interacts with SYT1/synaptotagmin-1 in a calcium-dependent manner. Binds the adapter protein complex AP-2. (Microbial infection) Interacts with C.botulinum neurotoxin type A (BoNT/A, botA). In terms of processing, phosphorylation by CK1 of the N-terminal cytoplasmic domain regulates interaction with SYT1. N-glycosylated. In terms of tissue distribution, expressed in conventional synapses and cone ribbon synapses in the retina (at protein level). Expressed in diaphragm motor nerve terminals (at protein level). Expressed in hippocampus neurons (at protein level).

It localises to the presynapse. It is found in the cytoplasmic vesicle. The protein resides in the secretory vesicle. The protein localises to the synaptic vesicle membrane. Plays a role in the control of regulated secretion in neural and endocrine cells, enhancing selectively low-frequency neurotransmission. Positively regulates vesicle fusion by maintaining the readily releasable pool of secretory vesicles. Its function is as follows. (Microbial infection) Receptor for C.botulinum neurotoxin type A (BoNT/A, botA); the toxin probably binds via extracellular loop 4. Functionally, (Microbial infection) Possible receptor for C.botulinum neurotoxin type D (BoNT/D, botD); BoNT/D does not bind to extracellular loop 4 as do BoNT/A and BoNT/E. In terms of biological role, (Microbial infection) Receptor for C.botulinum neurotoxin type E (BoNT/E); the toxin probably binds via extracellular loop 4. It probably requires glycosylation of Asn-573. This is Synaptic vesicle glycoprotein 2A (Sv2a) from Mus musculus (Mouse).